Consider the following 469-residue polypeptide: Probable Xaa-Pro aminopeptidase PEPP (469 aa).

Residues Asp-265, Asp-276, Glu-399, and Glu-439 each coordinate Mn(2+).

This sequence belongs to the peptidase M24B family. Mn(2+) is required as a cofactor.

The catalysed reaction is Release of any N-terminal amino acid, including proline, that is linked to proline, even from a dipeptide or tripeptide.. Its function is as follows. Catalyzes the removal of a penultimate prolyl residue from the N-termini of peptides. The chain is Probable Xaa-Pro aminopeptidase PEPP (PEPP) from Coccidioides posadasii (strain C735) (Valley fever fungus).